A 371-amino-acid polypeptide reads, in one-letter code: Spermatogenic leucine zipper protein 1 (371 aa).

2 coiled-coil regions span residues 96-148 and 177-289; these read EVSE…TVQD and FPHI…QKEE. S98 bears the Phosphoserine mark. Residues 110 to 120 form a helix-loop-helix motif region; sequence INKELVKKLLA. The segment at 121-188 is basic motif; the sequence is SLDLGKKENA…HIQEENIRLR (68 aa). S202 is modified (phosphoserine). Over residues 223–240 the composition is skewed to polar residues; the sequence is KTLKNNGTHSPTQTNNES. The interval 223-246 is disordered; the sequence is KTLKNNGTHSPTQTNNESAKQELE. A leucine-zipper region spans residues 245-266; that stretch reads LEEQVKRLKEDTYSLHLIATLL.

In terms of processing, phosphorylated by MAPK1/ERK2 and MAPK3/ERK1.

It localises to the cytoplasm. Its subcellular location is the nucleus. Its function is as follows. Transcription factor that binds to the DNA sequence 5'-CANNTG-3'(E box) and the G-box motif. May play an important role in the regulation of cell proliferation and differentiation during spermatogenesis. This is Spermatogenic leucine zipper protein 1 (SPZ1) from Bos taurus (Bovine).